The primary structure comprises 265 residues: ClpXP adapter protein SpxH (265 aa).

It belongs to the SpxH family. As to quaternary structure, interacts with Spx.

It is found in the cytoplasm. In terms of biological role, adapter protein required for efficient degradation of Spx by ClpXP under non-stress conditions. Interaction with Spx stabilizes Spx and exposes the C-terminus of Spx for recognition and proteolysis by ClpXP. The protein is ClpXP adapter protein SpxH of Staphylococcus haemolyticus (strain JCSC1435).